A 103-amino-acid polypeptide reads, in one-letter code: Small ribosomal subunit protein uS10 (103 aa).

Belongs to the universal ribosomal protein uS10 family. In terms of assembly, part of the 30S ribosomal subunit.

In terms of biological role, involved in the binding of tRNA to the ribosomes. The protein is Small ribosomal subunit protein uS10 of Chlorobium phaeobacteroides (strain DSM 266 / SMG 266 / 2430).